A 291-amino-acid chain; its full sequence is Bifunctional protein FolD (291 aa).

Residues 168–170, Thr195, and Ile236 each bind NADP(+); that span reads GRG.

This sequence belongs to the tetrahydrofolate dehydrogenase/cyclohydrolase family. As to quaternary structure, homodimer.

It carries out the reaction (6R)-5,10-methylene-5,6,7,8-tetrahydrofolate + NADP(+) = (6R)-5,10-methenyltetrahydrofolate + NADPH. The enzyme catalyses (6R)-5,10-methenyltetrahydrofolate + H2O = (6R)-10-formyltetrahydrofolate + H(+). It functions in the pathway one-carbon metabolism; tetrahydrofolate interconversion. In terms of biological role, catalyzes the oxidation of 5,10-methylenetetrahydrofolate to 5,10-methenyltetrahydrofolate and then the hydrolysis of 5,10-methenyltetrahydrofolate to 10-formyltetrahydrofolate. The polypeptide is Bifunctional protein FolD (Bifidobacterium longum subsp. infantis (strain ATCC 15697 / DSM 20088 / JCM 1222 / NCTC 11817 / S12)).